The chain runs to 350 residues: MNIYIGWLFKLIPLIMGLICIALGGFVLESSGQSEYFVAGHVLISLAAICLALFTTAFIIISQLTRGVNTFYNTLFPIIGYAGSIITMIWGWALLAGNDVMADEFVAGHVIFGVGMIAACVSTVAASSGHFLLIPKNAAGSKSDGTPVQAYSSLIGNCLIAVPVLLTLLGFIWSITLLRSADITPHYVAGHVLLGLTAICACLIGLVATIVHQTRNTFSTKEHWLWCYWVIFLGSITVLQGIYVLVSSDASARLAPGIILICLGMICYSIFSKVWLLALVWRRTCSLANRIPMIPVFTCLFCLFLASFLAEMAQTDMGYFIPSRVLVGLGAVCFTLFSIVSILEAGSAKK.

At M1 to N2 the chain is on the cytoplasmic side. Residues I3 to L23 traverse the membrane as a helical segment. Topologically, residues G24–H41 are periplasmic. A helical membrane pass occupies residues V42–S62. The Cytoplasmic portion of the chain corresponds to Q63–T74. The helical transmembrane segment at L75–L95 threads the bilayer. The Periplasmic portion of the chain corresponds to A96–E104. The chain crosses the membrane as a helical span at residues F105–A125. The Cytoplasmic portion of the chain corresponds to A126–N157. Residues C158–L178 form a helical membrane-spanning segment. The Periplasmic portion of the chain corresponds to R179–G190. The helical transmembrane segment at H191 to V211 threads the bilayer. Residues H212 to L225 are Cytoplasmic-facing. A helical transmembrane segment spans residues W226–V246. Residues S247–G257 lie on the Periplasmic side of the membrane. Residues I258–A278 traverse the membrane as a helical segment. Over L279–R290 the chain is Cytoplasmic. Residues I291–E311 form a helical membrane-spanning segment. Over M312–R324 the chain is Periplasmic. The chain crosses the membrane as a helical span at residues V325–A345. Topologically, residues G346–K350 are cytoplasmic.

It localises to the cell inner membrane. In Escherichia coli (strain K12), this protein is Inner membrane protein YhiM (yhiM).